Consider the following 325-residue polypeptide: MSSDCWTPFHARLHQLLQRRSLLPTRSRLLLAVSGGQDSLALVQLLRGLQPHWHWSLAIAHCDHGWRSDSTANAEHLRQLADQWQLPFYCQRSPEPPRSEAAARTWRYQVLEAIAADIDAALLVTGHTASDRAETLLYNLTRGSHLQGLASLRWQRSLSDRLTLVRPFLGFTRAETSKMVQQFQLPVWEDSTNRDRRFARNRLRLEVLPQLRQINPQCDRHLANTAELLADEADWLAELTEQVYQQSLSERGLCRSQLAQQPIALQRRVLHAFLQDQLQRSPSTVQVEELRQLITAPQGSCSSSLPQRRVAVVAGDWLRLQSVDD.

An ATP-binding site is contributed by 34-39 (SGGQDS).

Belongs to the tRNA(Ile)-lysidine synthase family.

It is found in the cytoplasm. It carries out the reaction cytidine(34) in tRNA(Ile2) + L-lysine + ATP = lysidine(34) in tRNA(Ile2) + AMP + diphosphate + H(+). Ligates lysine onto the cytidine present at position 34 of the AUA codon-specific tRNA(Ile) that contains the anticodon CAU, in an ATP-dependent manner. Cytidine is converted to lysidine, thus changing the amino acid specificity of the tRNA from methionine to isoleucine. This Synechococcus sp. (strain ATCC 27144 / PCC 6301 / SAUG 1402/1) (Anacystis nidulans) protein is tRNA(Ile)-lysidine synthase.